A 90-amino-acid chain; its full sequence is Small ribosomal subunit protein bS18 (90 aa).

Belongs to the bacterial ribosomal protein bS18 family. Part of the 30S ribosomal subunit. Forms a tight heterodimer with protein bS6.

Binds as a heterodimer with protein bS6 to the central domain of the 16S rRNA, where it helps stabilize the platform of the 30S subunit. The polypeptide is Small ribosomal subunit protein bS18 (Bacteroides thetaiotaomicron (strain ATCC 29148 / DSM 2079 / JCM 5827 / CCUG 10774 / NCTC 10582 / VPI-5482 / E50)).